A 273-amino-acid chain; its full sequence is Dermonecrotic toxin LhSicTox-alphaIA2aii (273 aa).

His5 is an active-site residue. Residues Glu25 and Asp27 each contribute to the Mg(2+) site. The Nucleophile role is filled by His41. Cystine bridges form between Cys45-Cys51 and Cys47-Cys190. Residue Asp85 participates in Mg(2+) binding.

The protein belongs to the arthropod phospholipase D family. Class II subfamily. Mg(2+) serves as cofactor. Expressed by the venom gland.

It is found in the secreted. It catalyses the reaction an N-(acyl)-sphingosylphosphocholine = an N-(acyl)-sphingosyl-1,3-cyclic phosphate + choline. The catalysed reaction is an N-(acyl)-sphingosylphosphoethanolamine = an N-(acyl)-sphingosyl-1,3-cyclic phosphate + ethanolamine. It carries out the reaction a 1-acyl-sn-glycero-3-phosphocholine = a 1-acyl-sn-glycero-2,3-cyclic phosphate + choline. The enzyme catalyses a 1-acyl-sn-glycero-3-phosphoethanolamine = a 1-acyl-sn-glycero-2,3-cyclic phosphate + ethanolamine. Functionally, dermonecrotic toxins cleave the phosphodiester linkage between the phosphate and headgroup of certain phospholipids (sphingolipid and lysolipid substrates), forming an alcohol (often choline) and a cyclic phosphate. This toxin acts on sphingomyelin (SM). It may also act on ceramide phosphoethanolamine (CPE), lysophosphatidylcholine (LPC) and lysophosphatidylethanolamine (LPE), but not on lysophosphatidylserine (LPS), and lysophosphatidylglycerol (LPG). It acts by transphosphatidylation, releasing exclusively cyclic phosphate products as second products. Induces dermonecrosis, hemolysis, increased vascular permeability, edema, inflammatory response, and platelet aggregation. This is Dermonecrotic toxin LhSicTox-alphaIA2aii from Loxosceles hirsuta (Recluse spider).